Consider the following 276-residue polypeptide: Secreted LysM effector LysM10 (276 aa).

The signal sequence occupies residues 1–22 (MLLSLVKFGILSVFLLAQEAVA). Asn27, Asn104, and Asn140 each carry an N-linked (GlcNAc...) asparagine glycan. A LysM domain is found at 219–264 (KTYIAKEDDTCKSISEAQSISTDRLVEVNHLDYSCSSLTSGTALCI). Asn267 carries N-linked (GlcNAc...) asparagine glycosylation.

This sequence belongs to the secreted LysM effector family.

The protein resides in the secreted. Secreted LysM effector that might have a role in sequestration of chitin oligosaccharides (breakdown products of fungal cell walls that are released during invasion and act as triggers of host immunity) to dampen host defense. The chain is Secreted LysM effector LysM10 from Penicillium expansum (Blue mold rot fungus).